Here is a 126-residue protein sequence, read N- to C-terminus: Holo-[acyl-carrier-protein] synthase (126 aa).

The Mg(2+) site is built by D9 and E58.

Belongs to the P-Pant transferase superfamily. AcpS family. Requires Mg(2+) as cofactor.

It is found in the cytoplasm. It carries out the reaction apo-[ACP] + CoA = holo-[ACP] + adenosine 3',5'-bisphosphate + H(+). Its function is as follows. Transfers the 4'-phosphopantetheine moiety from coenzyme A to a Ser of acyl-carrier-protein. The protein is Holo-[acyl-carrier-protein] synthase of Photobacterium profundum (strain SS9).